The following is a 287-amino-acid chain: Phosphatidylserine decarboxylase proenzyme (287 aa).

Residues D89, H146, and S252 each act as charge relay system; for autoendoproteolytic cleavage activity in the active site. S252 functions as the Schiff-base intermediate with substrate; via pyruvic acid; for decarboxylase activity in the catalytic mechanism. Residue S252 is modified to Pyruvic acid (Ser); by autocatalysis.

This sequence belongs to the phosphatidylserine decarboxylase family. PSD-B subfamily. Prokaryotic type I sub-subfamily. As to quaternary structure, heterodimer of a large membrane-associated beta subunit and a small pyruvoyl-containing alpha subunit. Requires pyruvate as cofactor. In terms of processing, is synthesized initially as an inactive proenzyme. Formation of the active enzyme involves a self-maturation process in which the active site pyruvoyl group is generated from an internal serine residue via an autocatalytic post-translational modification. Two non-identical subunits are generated from the proenzyme in this reaction, and the pyruvate is formed at the N-terminus of the alpha chain, which is derived from the carboxyl end of the proenzyme. The autoendoproteolytic cleavage occurs by a canonical serine protease mechanism, in which the side chain hydroxyl group of the serine supplies its oxygen atom to form the C-terminus of the beta chain, while the remainder of the serine residue undergoes an oxidative deamination to produce ammonia and the pyruvoyl prosthetic group on the alpha chain. During this reaction, the Ser that is part of the protease active site of the proenzyme becomes the pyruvoyl prosthetic group, which constitutes an essential element of the active site of the mature decarboxylase.

The protein resides in the cell membrane. The catalysed reaction is a 1,2-diacyl-sn-glycero-3-phospho-L-serine + H(+) = a 1,2-diacyl-sn-glycero-3-phosphoethanolamine + CO2. The protein operates within phospholipid metabolism; phosphatidylethanolamine biosynthesis; phosphatidylethanolamine from CDP-diacylglycerol: step 2/2. Functionally, catalyzes the formation of phosphatidylethanolamine (PtdEtn) from phosphatidylserine (PtdSer). This is Phosphatidylserine decarboxylase proenzyme from Shewanella pealeana (strain ATCC 700345 / ANG-SQ1).